We begin with the raw amino-acid sequence, 182 residues long: uncharacterized protein (182 aa).

Positions methionine 1 to alanine 29 are cleaved as a signal peptide. The helical transmembrane segment at tryptophan 152–valine 174 threads the bilayer.

It is found in the membrane. This is an uncharacterized protein from Bacillus subtilis (strain 168).